A 61-amino-acid chain; its full sequence is Small ribosomal subunit protein uS14 (61 aa).

4 residues coordinate Zn(2+): Cys-24, Cys-27, Cys-40, and Cys-43.

Belongs to the universal ribosomal protein uS14 family. Zinc-binding uS14 subfamily. As to quaternary structure, part of the 30S ribosomal subunit. Contacts proteins S3 and S10. Zn(2+) is required as a cofactor.

In terms of biological role, binds 16S rRNA, required for the assembly of 30S particles and may also be responsible for determining the conformation of the 16S rRNA at the A site. This chain is Small ribosomal subunit protein uS14, found in Thermus thermophilus (strain ATCC BAA-163 / DSM 7039 / HB27).